The primary structure comprises 922 residues: Isoleucine--tRNA ligase (922 aa).

A 'HIGH' region motif is present at residues 57–67; it reads PYANGDIHLGH. Residue E553 coordinates L-isoleucyl-5'-AMP. The short motif at 594–598 is the 'KMSKS' region element; it reads KMSKS. ATP is bound at residue K597. Residues C892, C895, C912, and C915 each coordinate Zn(2+).

This sequence belongs to the class-I aminoacyl-tRNA synthetase family. IleS type 1 subfamily. In terms of assembly, monomer. Zn(2+) is required as a cofactor.

Its subcellular location is the cytoplasm. It catalyses the reaction tRNA(Ile) + L-isoleucine + ATP = L-isoleucyl-tRNA(Ile) + AMP + diphosphate. In terms of biological role, catalyzes the attachment of isoleucine to tRNA(Ile). As IleRS can inadvertently accommodate and process structurally similar amino acids such as valine, to avoid such errors it has two additional distinct tRNA(Ile)-dependent editing activities. One activity is designated as 'pretransfer' editing and involves the hydrolysis of activated Val-AMP. The other activity is designated 'posttransfer' editing and involves deacylation of mischarged Val-tRNA(Ile). The chain is Isoleucine--tRNA ligase from Desulfitobacterium hafniense (strain DSM 10664 / DCB-2).